A 932-amino-acid chain; its full sequence is RNA-binding protein 12 (932 aa).

A disordered region spans residues 96–116 (DIPPANASRSGPPPSSGMSSR). Residues 98–116 (PPANASRSGPPPSSGMSSR) show a composition bias toward low complexity. An RRM 1 domain is found at 304-379 (LYVSVHGMPF…RYVEVSPATE (76 aa)). Ser352 and Ser375 each carry phosphoserine. Polar residues-rich tracts occupy residues 392–401 (KQNMGPSGQT) and 408–417 (LPRSKSPSGQ). The interval 392–424 (KQNMGPSGQTHPPPQTLPRSKSPSGQKRSRSRS) is disordered. Phosphoserine occurs at positions 420, 422, and 424. The RRM 2 domain occupies 430–507 (FCVYLKGLPF…RFIQVHPITK (78 aa)). Ser525 is modified (phosphoserine). The segment covering 717–734 (NGPPFNFPGNFGGSNAFG) has biased composition (low complexity). The segment at 717–853 (NGPPFNFPGN…PGFASSSGKP (137 aa)) is disordered. The span at 783-811 (SGFGGGPQNFGNGPGSLGGPPGFGSGPPG) shows a compositional bias: gly residues. The span at 824 to 836 (AFGPGPGPGPGPG) shows a compositional bias: pro residues. In terms of domain architecture, RRM 3 spans 856–932 (TVIKVQNMPF…GSRKVKLVLG (77 aa)).

It is found in the nucleus. This is RNA-binding protein 12 (RBM12) from Homo sapiens (Human).